The sequence spans 196 residues: Neurensin-1 (196 aa).

The next 2 membrane-spanning stretches (helical) occupy residues 67–87 (LISG…GFLV) and 121–141 (AVLF…SVFA).

It belongs to the VMP family. In terms of tissue distribution, expressed predominantly in brain. Also weakly expressed in lung and spleen. In brain, expressed strongly in nerve fibers of the cerebral cortex, anterior cerebral nuclei, hypothalamus, amygdaloid complex, brain stem of the metaencephalon and medulla oblongata, and moderately expressed in soma of neurons of the dentate gyrus of the hippocampus and Purkinje cells of the cerebellum.

It is found in the membrane. Its subcellular location is the cell projection. The protein localises to the neuron projection. Functionally, may play an important role in neural organelle transport, and in transduction of nerve signals or in nerve growth. May play a role in neurite extension. This chain is Neurensin-1, found in Mus musculus (Mouse).